The following is a 221-amino-acid chain: Serine/arginine-rich splicing factor 9 (221 aa).

RRM domains follow at residues 14–89 (GRIY…FPRA) and 111–187 (FRVL…PERG). A Glycyl lysine isopeptide (Lys-Gly) (interchain with G-Cter in SUMO2) cross-link involves residue lysine 36. Residues 187 to 198 (GTSYGCSRSRSG) show a composition bias toward low complexity. Positions 187–221 (GTSYGCSRSRSGSRGRDSPYQSRGSPHYFSPFRPY) are disordered. The tract at residues 188–200 (TSYGCSRSRSGSR) is interaction with SAFB1. Phosphoserine occurs at positions 189, 193, 195, 204, 208, and 211. Tyrosine 214 bears the Phosphotyrosine mark. Serine 216 is subject to Phosphoserine.

Belongs to the splicing factor SR family. In terms of assembly, interacts with KHDRBS3. Interacts with HABP4. Interacts with NOL3/ARC/NOP30. Interacts with NSEP1/YB-1/YB1. Interacts with SAFB/SAFB1. Interacts with SRSF6/SFRS6. Interacts with TRA2B/SFRS10. Interacts with C1QBP. May also interact with DUSP11/PIR1. Post-translationally, extensively phosphorylated on serine residues in the RS domain.

The protein localises to the nucleus. Plays a role in constitutive splicing and can modulate the selection of alternative splice sites. Represses the splicing of MAPT/Tau exon 10. The polypeptide is Serine/arginine-rich splicing factor 9 (Srsf9) (Rattus norvegicus (Rat)).